The primary structure comprises 343 residues: Ferrochelatase (343 aa).

His-191 and Glu-270 together coordinate Fe cation.

This sequence belongs to the ferrochelatase family.

It is found in the cytoplasm. The catalysed reaction is heme b + 2 H(+) = protoporphyrin IX + Fe(2+). It participates in porphyrin-containing compound metabolism; protoheme biosynthesis; protoheme from protoporphyrin-IX: step 1/1. In terms of biological role, catalyzes the ferrous insertion into protoporphyrin IX. The sequence is that of Ferrochelatase from Phenylobacterium zucineum (strain HLK1).